The primary structure comprises 454 residues: Chromosomal replication initiator protein DnaA (454 aa).

Residues 1–74 (MFDLDKFWQF…IQEAYAYADM (74 aa)) form a domain I, interacts with DnaA modulators region. Residues 74–116 (MEIQPKFEVAGKEGPERLVTPQPRIKTNQEILENRRDEFAQDL) are domain II. The tract at residues 117–333 (QLNSKYTFDT…GALVKVQAHA (217 aa)) is domain III, AAA+ region. Residues Gly161, Gly163, Lys164, and Thr165 each contribute to the ATP site. Residues 334–454 (TIEREDINVD…VYDLKAMLEH (121 aa)) form a domain IV, binds dsDNA region.

The protein belongs to the DnaA family. Oligomerizes as a right-handed, spiral filament on DNA at oriC.

It is found in the cytoplasm. Its function is as follows. Plays an essential role in the initiation and regulation of chromosomal replication. ATP-DnaA binds to the origin of replication (oriC) to initiate formation of the DNA replication initiation complex once per cell cycle. Binds the DnaA box (a 9 base pair repeat at the origin) and separates the double-stranded (ds)DNA. Forms a right-handed helical filament on oriC DNA; dsDNA binds to the exterior of the filament while single-stranded (ss)DNA is stabiized in the filament's interior. The ATP-DnaA-oriC complex binds and stabilizes one strand of the AT-rich DNA unwinding element (DUE), permitting loading of DNA polymerase. After initiation quickly degrades to an ADP-DnaA complex that is not apt for DNA replication. Binds acidic phospholipids. This Lactobacillus johnsonii (strain CNCM I-12250 / La1 / NCC 533) protein is Chromosomal replication initiator protein DnaA.